Here is a 223-residue protein sequence, read N- to C-terminus: Putative HTLV-1-related endogenous sequence (223 aa).

A compositionally biased stretch (low complexity) spans 1–19; it reads MRCAHAPAPRTRYPTRAPS. Residues 1 to 184 form a disordered region; sequence MRCAHAPAPR…ARAHGEAGAG (184 aa). Residues 115 to 126 show a composition bias toward basic and acidic residues; sequence GDRRREGPDRSP. A compositionally biased stretch (low complexity) spans 133–157; the sequence is PAAAAQPDSSSAQAPGPSTLRPAAT.

The sequence is that of Putative HTLV-1-related endogenous sequence (HRES1) from Homo sapiens (Human).